The sequence spans 156 residues: Ribosome maturation factor RimP (156 aa).

It belongs to the RimP family.

The protein localises to the cytoplasm. Its function is as follows. Required for maturation of 30S ribosomal subunits. In Bacillus cereus (strain B4264), this protein is Ribosome maturation factor RimP.